Here is a 453-residue protein sequence, read N- to C-terminus: Ribosomal protein uS12 methylthiotransferase RimO (453 aa).

One can recognise an MTTase N-terminal domain in the interval 6–116 (PKVGFVSLGC…VMEAVHEALP (111 aa)). Residues C15, C51, C80, C147, C151, and C154 each contribute to the [4Fe-4S] cluster site. The region spanning 133-370 (LTPRHYAYLK…MEKQAQISAA (238 aa)) is the Radical SAM core domain. One can recognise a TRAM domain in the interval 373 to 441 (EAKIGTVQQC…DHDLYGDALP (69 aa)).

This sequence belongs to the methylthiotransferase family. RimO subfamily. Requires [4Fe-4S] cluster as cofactor.

The protein localises to the cytoplasm. It catalyses the reaction L-aspartate(89)-[ribosomal protein uS12]-hydrogen + (sulfur carrier)-SH + AH2 + 2 S-adenosyl-L-methionine = 3-methylsulfanyl-L-aspartate(89)-[ribosomal protein uS12]-hydrogen + (sulfur carrier)-H + 5'-deoxyadenosine + L-methionine + A + S-adenosyl-L-homocysteine + 2 H(+). Functionally, catalyzes the methylthiolation of an aspartic acid residue of ribosomal protein uS12. The protein is Ribosomal protein uS12 methylthiotransferase RimO of Stenotrophomonas maltophilia (strain R551-3).